We begin with the raw amino-acid sequence, 152 residues long: Nucleoside diphosphate kinase (152 aa).

ATP-binding residues include K11, F59, R87, T93, R104, and N114. The active-site Pros-phosphohistidine intermediate is H117.

This sequence belongs to the NDK family. As to quaternary structure, homotetramer. It depends on Mg(2+) as a cofactor.

The protein localises to the cytoplasm. The catalysed reaction is a 2'-deoxyribonucleoside 5'-diphosphate + ATP = a 2'-deoxyribonucleoside 5'-triphosphate + ADP. It carries out the reaction a ribonucleoside 5'-diphosphate + ATP = a ribonucleoside 5'-triphosphate + ADP. Its function is as follows. Major role in the synthesis of nucleoside triphosphates other than ATP. The ATP gamma phosphate is transferred to the NDP beta phosphate via a ping-pong mechanism, using a phosphorylated active-site intermediate. In Prochlorococcus marinus (strain MIT 9301), this protein is Nucleoside diphosphate kinase.